Here is a 238-residue protein sequence, read N- to C-terminus: Thrombin-like enzyme gyroxin B2.1 (238 aa).

The Peptidase S1 domain maps to 1 to 229 (VIGGDECNIN…HLDWIQNIIA (229 aa)). Intrachain disulfides connect C7/C141, C28/C44, C78/C236, C120/C190, C152/C169, and C180/C205. Residue H43 is the Charge relay system of the active site. The N-linked (GlcNAc...) asparagine glycan is linked to N81. Residue D88 is the Charge relay system of the active site. The active-site Charge relay system is S184.

Belongs to the peptidase S1 family. Snake venom subfamily. In terms of assembly, monomer. As to expression, expressed by the venom gland.

It is found in the secreted. Thrombin-like snake venom serine protease. Displays a specificity similar to trypsin. Releases only fibrinopeptide A in the conversion of fibrinogen (FGA) to fibrin. Shows coagulant, esterase and amidase activities. Reversibly increases the permeability of the blood brain barrier (BBB) in mice. Induces the barrel rotation syndrome in mice, which is manifested by gyroxin-like, rapid rolling motions. This syndrome may be due to its effect on BBB permeability, and certainly also to other actions affecting endogenous substrates present in the endothelium, nervous tissues or blood. The chain is Thrombin-like enzyme gyroxin B2.1 from Crotalus durissus terrificus (South American rattlesnake).